Consider the following 484-residue polypeptide: Chromosomal replication initiator protein DnaA (484 aa).

The interval 1-73 (MQEGKNIWSL…EILTEKGHNT (73 aa)) is domain I, interacts with DnaA modulators. The domain II stretch occupies residues 73–140 (TINVEFINPP…EDIHTKYRNP (68 aa)). Residues 141–357 (FLKKKYTFEN…AAVTKLKAHI (217 aa)) form a domain III, AAA+ region region. Glycine 185, glycine 187, lysine 188, and threonine 189 together coordinate ATP. The interval 358 to 484 (DLEDIEIDTS…IELMNKINKN (127 aa)) is domain IV, binds dsDNA.

The protein belongs to the DnaA family. As to quaternary structure, oligomerizes as a right-handed, spiral filament on DNA at oriC.

The protein localises to the cytoplasm. Plays an essential role in the initiation and regulation of chromosomal replication. ATP-DnaA binds to the origin of replication (oriC) to initiate formation of the DNA replication initiation complex once per cell cycle. Binds the DnaA box (a 9 base pair repeat at the origin) and separates the double-stranded (ds)DNA. Forms a right-handed helical filament on oriC DNA; dsDNA binds to the exterior of the filament while single-stranded (ss)DNA is stabiized in the filament's interior. The ATP-DnaA-oriC complex binds and stabilizes one strand of the AT-rich DNA unwinding element (DUE), permitting loading of DNA polymerase. After initiation quickly degrades to an ADP-DnaA complex that is not apt for DNA replication. Binds acidic phospholipids. This chain is Chromosomal replication initiator protein DnaA, found in Borrelia turicatae (strain 91E135).